Here is a 905-residue protein sequence, read N- to C-terminus: Alanine--tRNA ligase (905 aa).

Positions 595, 599, 696, and 700 each coordinate Zn(2+).

This sequence belongs to the class-II aminoacyl-tRNA synthetase family. Zn(2+) is required as a cofactor.

It localises to the cytoplasm. The enzyme catalyses tRNA(Ala) + L-alanine + ATP = L-alanyl-tRNA(Ala) + AMP + diphosphate. Its function is as follows. Catalyzes the attachment of alanine to tRNA(Ala) in a two-step reaction: alanine is first activated by ATP to form Ala-AMP and then transferred to the acceptor end of tRNA(Ala). Also edits incorrectly charged Ser-tRNA(Ala) and Gly-tRNA(Ala) via its editing domain. The polypeptide is Alanine--tRNA ligase (Anaeromyxobacter dehalogenans (strain 2CP-C)).